We begin with the raw amino-acid sequence, 282 residues long: Major surface antigen 4 (282 aa).

The first 29 residues, 1-29, serve as a signal peptide directing secretion; that stretch reads MNYRELFTGGLSAATVCACSLLVSGAVVA.

This sequence belongs to the surface antigen msp4 family.

This chain is Major surface antigen 4 (msp4), found in Anaplasma marginale.